Consider the following 432-residue polypeptide: Adenylosuccinate synthetase (432 aa).

GTP is bound by residues Gly-13 to Lys-19 and Gly-41 to Thr-43. Asp-14 (proton acceptor) is an active-site residue. Mg(2+) is bound by residues Asp-14 and Gly-41. IMP is bound by residues Asp-14–Lys-17, Asn-39–His-42, Thr-131, Arg-145, Gln-226, Thr-241, and Arg-305. Catalysis depends on His-42, which acts as the Proton donor. Residue Ser-301 to Arg-307 coordinates substrate. GTP contacts are provided by residues Arg-307, Lys-333 to Asp-335, and Ser-416 to Gly-418.

This sequence belongs to the adenylosuccinate synthetase family. As to quaternary structure, homodimer. Mg(2+) serves as cofactor.

The protein resides in the cytoplasm. It catalyses the reaction IMP + L-aspartate + GTP = N(6)-(1,2-dicarboxyethyl)-AMP + GDP + phosphate + 2 H(+). It participates in purine metabolism; AMP biosynthesis via de novo pathway; AMP from IMP: step 1/2. Functionally, plays an important role in the de novo pathway of purine nucleotide biosynthesis. Catalyzes the first committed step in the biosynthesis of AMP from IMP. This is Adenylosuccinate synthetase from Neisseria meningitidis serogroup A / serotype 4A (strain DSM 15465 / Z2491).